A 321-amino-acid chain; its full sequence is Carbonic anhydrase, chloroplastic (321 aa).

The N-terminal 100 residues, 1–100, are a transit peptide targeting the chloroplast; it reads MSTASINSCL…AAARVDQITA (100 aa).

The protein belongs to the beta-class carbonic anhydrase family. As to quaternary structure, homohexamer.

The protein localises to the plastid. It localises to the chloroplast stroma. The catalysed reaction is hydrogencarbonate + H(+) = CO2 + H2O. Functionally, reversible hydration of carbon dioxide. The polypeptide is Carbonic anhydrase, chloroplastic (Nicotiana tabacum (Common tobacco)).